The primary structure comprises 343 residues: Protein RecA (343 aa).

66-73 (GPESSGKT) is an ATP binding site.

It belongs to the RecA family.

It localises to the cytoplasm. Its function is as follows. Can catalyze the hydrolysis of ATP in the presence of single-stranded DNA, the ATP-dependent uptake of single-stranded DNA by duplex DNA, and the ATP-dependent hybridization of homologous single-stranded DNAs. It interacts with LexA causing its activation and leading to its autocatalytic cleavage. This is Protein RecA from Rickettsia africae (strain ESF-5).